An 80-amino-acid chain; its full sequence is Conotoxin SmIVB (80 aa).

The first 21 residues, 1–21, serve as a signal peptide directing secretion; that stretch reads MGMRMMFTVFLLVVLATTVVS. Positions 22–38 are excised as a propeptide; it reads IPSDRASDGRNAEVNER. A 4-hydroxyproline modification is found at proline 40. Serine 45 is a glycosylation site (O-linked (HexNAc...) serine). 4-hydroxyproline occurs at positions 55, 60, 61, 70, and 72. Serine 75 is subject to Serine amide. Positions 76-80 are excised as a propeptide; it reads GRRNH.

This sequence belongs to the conotoxin A superfamily. Contains 3 disulfide bonds. As to expression, expressed by the venom duct.

The protein localises to the secreted. Its function is as follows. Neurotoxin with probable activity on sodium channel. Induces intense repetitive firing of the frog neuromuscular junction, leading to a tetanic contracture in muscle fiber (spastic paralysis). In vivo, shows the same effect as the whole venom when injected on fish prey. This Conus stercusmuscarum (Fly-specked cone) protein is Conotoxin SmIVB.